Consider the following 251-residue polypeptide: uncharacterized protein (251 aa).

Transmembrane regions (helical) follow at residues 48–68 (WMVGGVTILTFMALLYLVELI), 88–108 (VLWGISFAPVLHANWQHLVAN), 110–130 (IPLLVLGFLIALAGLSRFIWV), 132–152 (AMVWIFGGSATWLIGNMGSSF), 158–178 (IGVSGLIFGWLAFLLVFGLFV), 184–204 (IIGCMVLFAYGGVLLGVMPVL), and 209–229 (GVSWQGHLCGAISGVVAAYLL).

The protein to M.tuberculosis Rv1337.

Its subcellular location is the cell membrane. This is an uncharacterized protein from Mycobacterium leprae (strain TN).